The following is a 59-amino-acid chain: Large ribosomal subunit protein bL32 (59 aa).

A disordered region spans residues 1–59 (MAVQQNKKSPSKRGMHRAHDFLTAPVIAIEPSTGEAHRRHHISPNGFYRGRKVVKGKDE). The segment covering 49-59 (RGRKVVKGKDE) has biased composition (basic residues).

The protein belongs to the bacterial ribosomal protein bL32 family.

The polypeptide is Large ribosomal subunit protein bL32 (Laribacter hongkongensis (strain HLHK9)).